The sequence spans 1468 residues: DNA polymerase III PolC-type (1468 aa).

Positions 197–217 (QKSLEDSAPPSEEVTPTQNYD) are disordered. The Exonuclease domain occupies 430-586 (YVVFDVETTG…YDAEATGRLL (157 aa)).

The protein belongs to the DNA polymerase type-C family. PolC subfamily.

It localises to the cytoplasm. It catalyses the reaction DNA(n) + a 2'-deoxyribonucleoside 5'-triphosphate = DNA(n+1) + diphosphate. Its function is as follows. Required for replicative DNA synthesis. This DNA polymerase also exhibits 3' to 5' exonuclease activity. The polypeptide is DNA polymerase III PolC-type (Streptococcus agalactiae serotype III (strain NEM316)).